A 199-amino-acid chain; its full sequence is 7-methyl-GTP pyrophosphatase (199 aa).

Asp-72 acts as the Proton acceptor in catalysis.

It belongs to the Maf family. YceF subfamily. A divalent metal cation serves as cofactor.

The protein localises to the cytoplasm. The catalysed reaction is N(7)-methyl-GTP + H2O = N(7)-methyl-GMP + diphosphate + H(+). Functionally, nucleoside triphosphate pyrophosphatase that hydrolyzes 7-methyl-GTP (m(7)GTP). May have a dual role in cell division arrest and in preventing the incorporation of modified nucleotides into cellular nucleic acids. This Alkalilimnicola ehrlichii (strain ATCC BAA-1101 / DSM 17681 / MLHE-1) protein is 7-methyl-GTP pyrophosphatase.